We begin with the raw amino-acid sequence, 155 residues long: Pathogenesis-related protein STH-21 (155 aa).

This sequence belongs to the BetVI family.

This Solanum tuberosum (Potato) protein is Pathogenesis-related protein STH-21 (STH-21).